The primary structure comprises 802 residues: Threonine--tRNA ligase 2, cytoplasmic (802 aa).

The residue at position 2 (A2) is an N-acetylalanine. Coiled coils occupy residues 3-23 (AEAL…EDIR) and 76-96 (AEER…AQEA). A compositionally biased stretch (low complexity) spans 86–98 (ESAELEAAQEAGA). The disordered stretch occupies residues 86–123 (ESAELEAAQEAGAQPPPSQSQDKDMKKKKMKESEADSE). A compositionally biased stretch (basic and acidic residues) spans 106–123 (QDKDMKKKKMKESEADSE). The region spanning 157–222 (DTSNIITVRV…EGDSSLELLT (66 aa)) is the TGS domain. Phosphoserine is present on S453. The Nuclear localization signal motif lies at 786 to 792 (KLKNLRK).

It belongs to the class-II aminoacyl-tRNA synthetase family. In terms of assembly, may be a component of the multisynthetase complex (MSC), a large multi-subunit complex which contains at least eight different aminoacyl-tRNA synthetases plus three auxillary subunits AIMP1, AIMP2 and EEF1E1. Interacts with the MSC components EPRS1, AIMP1, AIMP2 and KARS1.

The protein resides in the cytoplasm. Its subcellular location is the nucleus. The enzyme catalyses tRNA(Thr) + L-threonine + ATP = L-threonyl-tRNA(Thr) + AMP + diphosphate + H(+). Catalyzes the attachment of threonine to tRNA(Thr) in a two-step reaction: threonine is first activated by ATP to form Thr-AMP and then transferred to the acceptor end of tRNA(Thr). Also edits incorrectly charged tRNA(Thr) via its editing domain, at the post-transfer stage. The polypeptide is Threonine--tRNA ligase 2, cytoplasmic (Homo sapiens (Human)).